The following is a 304-amino-acid chain: Homoserine kinase (304 aa).

90-100 (PLARGLGSSAS) contributes to the ATP binding site.

It belongs to the GHMP kinase family. Homoserine kinase subfamily.

The protein localises to the cytoplasm. The enzyme catalyses L-homoserine + ATP = O-phospho-L-homoserine + ADP + H(+). It functions in the pathway amino-acid biosynthesis; L-threonine biosynthesis; L-threonine from L-aspartate: step 4/5. In terms of biological role, catalyzes the ATP-dependent phosphorylation of L-homoserine to L-homoserine phosphate. The protein is Homoserine kinase of Staphylococcus aureus (strain bovine RF122 / ET3-1).